Reading from the N-terminus, the 289-residue chain is Proteasome subunit beta (289 aa).

The propeptide at 1 to 55 (MTWPLPDRLSINSAISGSAVDLSSFAEFLRRQAPELLPASIKHGGGAVGDQLPHA) is removed in mature form; by autocatalysis. The active-site Nucleophile is the Thr56.

Belongs to the peptidase T1B family. As to quaternary structure, the 20S proteasome core is composed of 14 alpha and 14 beta subunits that assemble into four stacked heptameric rings, resulting in a barrel-shaped structure. The two inner rings, each composed of seven catalytic beta subunits, are sandwiched by two outer rings, each composed of seven alpha subunits. The catalytic chamber with the active sites is on the inside of the barrel. Has a gated structure, the ends of the cylinder being occluded by the N-termini of the alpha-subunits. Is capped by the proteasome-associated ATPase, ARC.

The protein localises to the cytoplasm. The catalysed reaction is Cleavage of peptide bonds with very broad specificity.. The protein operates within protein degradation; proteasomal Pup-dependent pathway. Its activity is regulated as follows. The formation of the proteasomal ATPase ARC-20S proteasome complex, likely via the docking of the C-termini of ARC into the intersubunit pockets in the alpha-rings, may trigger opening of the gate for substrate entry. Interconversion between the open-gate and close-gate conformations leads to a dynamic regulation of the 20S proteasome proteolysis activity. Functionally, component of the proteasome core, a large protease complex with broad specificity involved in protein degradation. In Mycobacterium marinum (strain ATCC BAA-535 / M), this protein is Proteasome subunit beta.